The primary structure comprises 506 residues: Galactose/methyl galactoside import ATP-binding protein MglA (506 aa).

ABC transporter domains follow at residues 14-249 and 264-506; these read LTMT…VGRE and VILE…AKYL. 46-53 contributes to the ATP binding site; that stretch reads GENGAGKS.

This sequence belongs to the ABC transporter superfamily. Galactose/methyl galactoside importer (TC 3.A.1.2.3) family. The complex is composed of one ATP-binding protein (MglA), two transmembrane proteins (MglC) and a solute-binding protein (MglB).

The protein localises to the cell inner membrane. The catalysed reaction is D-galactose(out) + ATP + H2O = D-galactose(in) + ADP + phosphate + H(+). It catalyses the reaction methyl beta-D-galactoside(out) + ATP + H2O = methyl beta-D-galactoside(in) + ADP + phosphate + H(+). Part of the ABC transporter complex MglABC involved in galactose/methyl galactoside import. Responsible for energy coupling to the transport system. The sequence is that of Galactose/methyl galactoside import ATP-binding protein MglA from Mannheimia succiniciproducens (strain KCTC 0769BP / MBEL55E).